The following is a 69-amino-acid chain: Magnetosome protein MamI (69 aa).

At 1-2 the chain is on the cytoplasmic side; that stretch reads MP. A helical transmembrane segment spans residues 3-23; that stretch reads SVIFGLLALAIGLLGLTAWWW. The Lumenal portion of the chain corresponds to 24–31; that stretch reads SVTEFLRG. A helical transmembrane segment spans residues 32-52; sequence AVPVALIIFGLVALAAGVQSV. The Cytoplasmic portion of the chain corresponds to 53–69; it reads RVPPAGKRANSDPNIDG.

The protein belongs to the magnetosome MamI protein family.

It localises to the magnetosome membrane. Its function is as follows. May be involved in an early stage of magnetosome nucleation. Not essential for formation of magnetosome membrane vesicles, it is probably functionally redundant with other proteins. May bind magnetite. One of 7 genes (mamLQBIEMO) able to induce magnetosome membrane biogenesis; coexpression of mamLQRBIEMO in a deletion of the 17 gene mamAB operon restores magnetosome vesicle formation but not magnetite biosynthesis. This Magnetospirillum gryphiswaldense (strain DSM 6361 / JCM 21280 / NBRC 15271 / MSR-1) protein is Magnetosome protein MamI.